The sequence spans 227 residues: Cytochrome c biogenesis ATP-binding export protein CcmA (227 aa).

Residues 26–227 (LAASGLGFSR…ARTLRLDARS (202 aa)) enclose the ABC transporter domain. 58–65 (GANGSGKT) is an ATP binding site.

It belongs to the ABC transporter superfamily. CcmA exporter (TC 3.A.1.107) family. In terms of assembly, the complex is composed of two ATP-binding proteins (CcmA) and two transmembrane proteins (CcmB).

The protein resides in the cell inner membrane. It catalyses the reaction heme b(in) + ATP + H2O = heme b(out) + ADP + phosphate + H(+). In terms of biological role, part of the ABC transporter complex CcmAB involved in the biogenesis of c-type cytochromes; once thought to export heme, this seems not to be the case, but its exact role is uncertain. Responsible for energy coupling to the transport system. This Cupriavidus necator (strain ATCC 17699 / DSM 428 / KCTC 22496 / NCIMB 10442 / H16 / Stanier 337) (Ralstonia eutropha) protein is Cytochrome c biogenesis ATP-binding export protein CcmA.